The chain runs to 1020 residues: Fanconi-associated nuclease 1 (1020 aa).

The span at 1-11 shows a compositional bias: basic and acidic residues; the sequence is MPSQRKSPDQK. A disordered region spans residues 1-24; the sequence is MPSQRKSPDQKRPRRSLSTSKTAK. A D-box motif is present at residues 14 to 22; the sequence is RRSLSTSKT. The UBZ4-type zinc-finger motif lies at 41-69; sequence KLACSTCHKMVPRYDLIRHLDESCANNGV. Cysteine 44, cysteine 47, histidine 59, and cysteine 64 together coordinate Zn(2+). The segment at 173-208 is disordered; sequence KNEGLASQCPQTSPSTPGTSLTDNCPEMEDKDEVLN. The span at 180–195 shows a compositional bias: polar residues; the sequence is QCPQTSPSTPGTSLTD. Residues 212–214 carry the KEN box motif; sequence KEN. Basic and acidic residues predominate over residues 224–242; it reads ENASEQKVKNNKITGDESQ. 2 disordered regions span residues 224 to 252 and 269 to 288; these read ENAS…PALT and LVSN…ESAR. The segment covering 269–278 has biased composition (polar residues); it reads LVSNTKSSPG. Residues 673–737 adopt a coiled-coil conformation; sequence SSRAVEVLER…AIRCIREGLA (65 aa). Mn(2+) contacts are provided by glutamate 837, aspartate 963, glutamate 978, and valine 979. A VRR-NUC domain is found at 898-1010; it reads AESLRAWVGE…GADVEVCHVV (113 aa).

This sequence belongs to the FAN1 family. Interacts with FANCD2 (when monoubiquitinated). Interacts with FANCI, MLH1, MLH3 and PMS2. It depends on Mn(2+) as a cofactor. The cofactor is Mg(2+). Post-translationally, ubiquitinated and degraded during mitotic exit by the APC/C-Cdh1 complex.

Its subcellular location is the nucleus. The catalysed reaction is Hydrolytically removes 5'-nucleotides successively from the 3'-hydroxy termini of 3'-hydroxy-terminated oligonucleotides.. Nuclease required for the repair of DNA interstrand cross-links (ICL) recruited at sites of DNA damage by monoubiquitinated FANCD2. Specifically involved in repair of ICL-induced DNA breaks by being required for efficient homologous recombination, probably in the resolution of homologous recombination intermediates. Not involved in DNA double-strand breaks resection. Acts as a 5'-3' exonuclease that anchors at a cut end of DNA and cleaves DNA successively at every third nucleotide, allowing to excise an ICL from one strand through flanking incisions. Probably keeps excising with 3'-flap annealing until it reaches and unhooks the ICL. Acts at sites that have a 5'-terminal phosphate anchor at a nick or a 1- or 2-nucleotide flap and is augmented by a 3' flap. Also has endonuclease activity toward 5'-flaps. In Mus musculus (Mouse), this protein is Fanconi-associated nuclease 1.